An 89-amino-acid polypeptide reads, in one-letter code: Large ribosomal subunit protein bL27 (89 aa).

The disordered stretch occupies residues 1-22 (MAHKKAGGSSRNGRDSESKRLG).

The protein belongs to the bacterial ribosomal protein bL27 family.

The sequence is that of Large ribosomal subunit protein bL27 from Bartonella tribocorum (strain CIP 105476 / IBS 506).